The chain runs to 222 residues: UPF0758 protein YicR (222 aa).

Residues 100–222 (PLLSPEMTRE…YVSFAERGWI (123 aa)) enclose the MPN domain. Histidine 171, histidine 173, and aspartate 184 together coordinate Zn(2+). Positions 171 to 184 (HNHPSGCAEPSKAD) match the JAMM motif motif.

This sequence belongs to the UPF0758 family. YicR subfamily.

The protein is UPF0758 protein YicR of Escherichia coli (strain K12 / MC4100 / BW2952).